Here is an 84-residue protein sequence, read N- to C-terminus: Large ribosomal subunit protein bL27 (84 aa).

A disordered region spans residues 1–21 (MAHKKGGGSTKNGRDSNPKYL).

Belongs to the bacterial ribosomal protein bL27 family.

This Chlorobium limicola (strain DSM 245 / NBRC 103803 / 6330) protein is Large ribosomal subunit protein bL27.